A 479-amino-acid polypeptide reads, in one-letter code: MSEVRVRFAPSPTGSLHIGGARTALFNWLFARHNGGKFILRVDDTDLQRSTEESMKGILEGLKWLGIDWDEGPIYQSQRLEEYRKFANKLLKEGKAYYCFCTKEELEEMRKQAEKEGRPPMYTGKCRNLTKEQIEEYLRQGKKPVIRLKVPQQGKTVVHDIIRGDVEFDNSTFDDFIIMKSDNMPTYNFATVVDDYQMGITHVIRAEEHLSNTPKQILIFEALGLEIPQFAHVSMVLAPDRSKLSKRHGATSVQEFRDQGYLPEAIVNYITLLGWIPKDGEEIFDVSKSKKEFTLERVSKNPAIYDVQKLTWINGHYIRNYDLDKLTEVVIPFLKAKNFIGEDFDYDYIKKIVSVVREREKTLVDVADAMSYYFTEVYEYEEKGVKKYFTKEKVVDILKKAVVTLKEVEPFNKFTTEEAYRKLVEELQISSGELFHPTRLAISGRTFGPGLFDIMELLGKERTIERIEKAIDFIQKMRK.

The 'HIGH' region signature appears at 10-20; it reads PSPTGSLHIGG. The short motif at 243-247 is the 'KMSKS' region element; that stretch reads KLSKR. Residue lysine 246 participates in ATP binding.

It belongs to the class-I aminoacyl-tRNA synthetase family. Glutamate--tRNA ligase type 1 subfamily. Monomer.

The protein resides in the cytoplasm. It catalyses the reaction tRNA(Glu) + L-glutamate + ATP = L-glutamyl-tRNA(Glu) + AMP + diphosphate. In terms of biological role, catalyzes the attachment of glutamate to tRNA(Glu) in a two-step reaction: glutamate is first activated by ATP to form Glu-AMP and then transferred to the acceptor end of tRNA(Glu). This is Glutamate--tRNA ligase 2 from Thermoanaerobacter pseudethanolicus (strain ATCC 33223 / 39E) (Clostridium thermohydrosulfuricum).